Reading from the N-terminus, the 73-residue chain is UPF0337 protein lp_1708 (73 aa).

2 stretches are compositionally biased toward basic and acidic residues: residues 1 to 35 (MSDV…REAQ) and 44 to 73 (KAKD…KSDD). A disordered region spans residues 1–73 (MSDVNKKFDS…KDKMKKKSDD (73 aa)).

It belongs to the UPF0337 (CsbD) family.

The chain is UPF0337 protein lp_1708 from Lactiplantibacillus plantarum (strain ATCC BAA-793 / NCIMB 8826 / WCFS1) (Lactobacillus plantarum).